The sequence spans 162 residues: MSGMRVYLGADHAGYELKRQIIEHLKQSGHQPIDCGAFSYDVDDEYPAFCITAATRTVADPGSLGIVLGGSGNGEQIAANKVVGARCALAWSVETARLAREHNNAQLIGIGGRMHTVAEALTIVDAFVTTPWSEAQRHQRRIDILAEFERTHQAPPVPGAQA.

D-ribulose 5-phosphate is bound by residues 11–12 (DH) and 70–74 (GSGNG). The Proton acceptor role is filled by glutamate 75. The active-site Proton donor is the histidine 102. 4 residues coordinate D-ribulose 5-phosphate: asparagine 103, arginine 113, arginine 137, and arginine 141.

Belongs to the LacAB/RpiB family. In terms of assembly, homodimer.

It carries out the reaction aldehydo-D-ribose 5-phosphate = D-ribulose 5-phosphate. It participates in carbohydrate degradation; pentose phosphate pathway; D-ribose 5-phosphate from D-ribulose 5-phosphate (non-oxidative stage): step 1/1. Its function is as follows. Catalyzes the interconversion of ribulose-5-P and ribose-5-P. The sequence is that of Ribose-5-phosphate isomerase B from Mycobacterium leprae (strain TN).